The following is a 161-amino-acid chain: RNA pyrophosphohydrolase (161 aa).

Residues 12–154 (PYRPGVGMMI…KRKLYQAVVK (143 aa)) form the Nudix hydrolase domain. The Nudix box signature appears at 46–67 (GGIVPGETPSIAAMREMLEEIG).

It belongs to the Nudix hydrolase family. RppH subfamily. The cofactor is a divalent metal cation.

In terms of biological role, accelerates the degradation of transcripts by removing pyrophosphate from the 5'-end of triphosphorylated RNA, leading to a more labile monophosphorylated state that can stimulate subsequent ribonuclease cleavage. The chain is RNA pyrophosphohydrolase from Rickettsia peacockii (strain Rustic).